We begin with the raw amino-acid sequence, 404 residues long: Protein translocase subunit SecF (404 aa).

Helical transmembrane passes span 15-35 (KWYFLAFSLVFSVAGLISMGA), 225-245 (LLATLYSLGGMLVYLWFRFEL), 246-266 (IYGIGAVVACFHDTIITVGAF), 275-295 (LTVVAAILTLIGYSMNDTIVV), 327-347 (ILTSGLTFLTVLSLYVFGGEV), and 355-375 (LVIGILIGTYSSIAVAAPMLV).

It belongs to the SecD/SecF family. SecF subfamily. In terms of assembly, forms a complex with SecD. Part of the essential Sec protein translocation apparatus which comprises SecA, SecYEG and auxiliary proteins SecDF. Other proteins may also be involved.

The protein resides in the cell inner membrane. Its function is as follows. Part of the Sec protein translocase complex. Interacts with the SecYEG preprotein conducting channel. SecDF uses the proton motive force (PMF) to complete protein translocation after the ATP-dependent function of SecA. This is Protein translocase subunit SecF from Koribacter versatilis (strain Ellin345).